The following is a 362-amino-acid chain: H-2 class I histocompatibility antigen, L-D alpha chain (362 aa).

A signal peptide spans 1–24 (MGAMAPRTLLLLLAAALAPTQTRA). An alpha-1 region spans residues 25–114 (GPHSMRYFET…LLGYYNQSAG (90 aa)). The Extracellular segment spans residues 25–309 (GPHSMRYFET…PPPSTDSYMV (285 aa)). A glycan (N-linked (GlcNAc...) asparagine) is linked at Asn-110. Positions 115–206 (GTHTLQWMYG…KNGNATLLRT (92 aa)) are alpha-2. An intrachain disulfide couples Cys-125 to Cys-188. Asn-200 and Asn-280 each carry an N-linked (GlcNAc...) asparagine glycan. The interval 207-298 (DSPKAHVTHH…GLPEPLTLRW (92 aa)) is alpha-3. The Ig-like C1-type domain occupies 209–297 (PKAHVTHHPR…EGLPEPLTLR (89 aa)). The cysteines at positions 227 and 283 are disulfide-linked. Positions 299–309 (EPPPSTDSYMV) are connecting peptide. A helical transmembrane segment spans residues 310 to 331 (IVAVLGVLGAMAIIGAVVAFVM). The Cytoplasmic portion of the chain corresponds to 332 to 362 (KRRRNTGGKGGDYALAPGSQSSEMSLRDCKA). Residues 340 to 362 (KGGDYALAPGSQSSEMSLRDCKA) are disordered. Ser-353 and Ser-356 each carry phosphoserine.

The protein belongs to the MHC class I family. Heterodimer of an alpha chain and a beta chain (beta-2-microglobulin).

The protein resides in the membrane. Involved in the presentation of foreign antigens to the immune system. This is H-2 class I histocompatibility antigen, L-D alpha chain (H2-L) from Mus musculus (Mouse).